Consider the following 672-residue polypeptide: tRNA 5-methylaminomethyl-2-thiouridine biosynthesis bifunctional protein MnmC (672 aa).

The segment at 1-241 (MHKVQFADVH…KRECLQGVKA (241 aa)) is tRNA (mnm(5)s(2)U34)-methyltransferase. Positions 269-672 (IGGGIASVFS…LLKGSQVKQG (404 aa)) are FAD-dependent cmnm(5)s(2)U34 oxidoreductase.

The protein in the N-terminal section; belongs to the methyltransferase superfamily. tRNA (mnm(5)s(2)U34)-methyltransferase family. This sequence in the C-terminal section; belongs to the DAO family. FAD is required as a cofactor.

The protein localises to the cytoplasm. The catalysed reaction is 5-aminomethyl-2-thiouridine(34) in tRNA + S-adenosyl-L-methionine = 5-methylaminomethyl-2-thiouridine(34) in tRNA + S-adenosyl-L-homocysteine + H(+). Its function is as follows. Catalyzes the last two steps in the biosynthesis of 5-methylaminomethyl-2-thiouridine (mnm(5)s(2)U) at the wobble position (U34) in tRNA. Catalyzes the FAD-dependent demodification of cmnm(5)s(2)U34 to nm(5)s(2)U34, followed by the transfer of a methyl group from S-adenosyl-L-methionine to nm(5)s(2)U34, to form mnm(5)s(2)U34. This Pasteurella multocida (strain Pm70) protein is tRNA 5-methylaminomethyl-2-thiouridine biosynthesis bifunctional protein MnmC.